Reading from the N-terminus, the 519-residue chain is Aspartokinase (519 aa).

A Phosphoserine modification is found at Ser326. Residue Thr328 is modified to Phosphothreonine. The ACT domain maps to 436-518 (LVGKHMRNTT…MLVEKPWLYS (83 aa)).

The protein belongs to the aspartokinase family.

The enzyme catalyses L-aspartate + ATP = 4-phospho-L-aspartate + ADP. Its pathway is amino-acid biosynthesis; L-methionine biosynthesis via de novo pathway; L-homoserine from L-aspartate: step 1/3. It participates in amino-acid biosynthesis; L-threonine biosynthesis; L-threonine from L-aspartate: step 1/5. Functionally, phosphorylates aspartate, the first step in the biosynthesis of amino acids that derive from aspartate (the aspartate family of amino acids), including methioinine and threonine, the latter of which is a precursor to isoleucine. The chain is Aspartokinase from Schizosaccharomyces pombe (strain 972 / ATCC 24843) (Fission yeast).